The chain runs to 419 residues: Gamma-glutamyl phosphate reductase (419 aa).

This sequence belongs to the gamma-glutamyl phosphate reductase family.

Its subcellular location is the cytoplasm. The enzyme catalyses L-glutamate 5-semialdehyde + phosphate + NADP(+) = L-glutamyl 5-phosphate + NADPH + H(+). The protein operates within amino-acid biosynthesis; L-proline biosynthesis; L-glutamate 5-semialdehyde from L-glutamate: step 2/2. Its function is as follows. Catalyzes the NADPH-dependent reduction of L-glutamate 5-phosphate into L-glutamate 5-semialdehyde and phosphate. The product spontaneously undergoes cyclization to form 1-pyrroline-5-carboxylate. The chain is Gamma-glutamyl phosphate reductase from Bordetella bronchiseptica (strain ATCC BAA-588 / NCTC 13252 / RB50) (Alcaligenes bronchisepticus).